An 896-amino-acid chain; its full sequence is Desmocollin-3 (896 aa).

The signal sequence occupies residues 1–27 (MAAAGPRRSVRGAVCLHLLLTLVIFSR). A propeptide spanning residues 28–135 (AGEACKKVIL…RETVLRRAKR (108 aa)) is cleaved from the precursor. Cadherin domains follow at residues 136–243 (RWAP…HPVF), 244–355 (TEAI…APTF), 356–471 (RQNA…GPEC), 472–579 (TPAA…EILQ), and 580–690 (EYVV…ILGK). Residues 136 to 690 (RWAPIPCSMQ…SRSTGVILGK (555 aa)) are Extracellular-facing. Asparagine 166 carries N-linked (GlcNAc...) asparagine glycosylation. N-linked (GlcNAc...) asparagine glycans are attached at residues asparagine 392, asparagine 546, and asparagine 629. Residues 691-711 (WAILAILLGIALLFSVLLTLV) form a helical membrane-spanning segment. The Cytoplasmic portion of the chain corresponds to 712-896 (CGVFGATKGK…ITLAEACTKR (185 aa)).

In terms of assembly, may form homodimers. Interacts with DSG1; there is evidence to suggest that the interaction promotes cell-cell adhesion of keratinocytes. In terms of tissue distribution, expressed throughout the basal and spinous layer of the epidermis with weak expression in the granular layer (at protein level). Also expressed in the buccal mucosa, esophagus and cervix (at protein level).

The protein localises to the cell membrane. It localises to the cell junction. Its subcellular location is the desmosome. It is found in the cytoplasm. Its function is as follows. A component of desmosome cell-cell junctions which are required for positive regulation of cellular adhesion. Required for cell-cell adhesion in the epidermis, as a result required for the maintenance of the dermal cohesion and the dermal barrier function. Required for cell-cell adhesion of epithelial cell layers surrounding the telogen hair club, as a result plays an important role in telogen hair shaft anchorage. Essential for successful completion of embryo compaction and embryo development. In Homo sapiens (Human), this protein is Desmocollin-3 (DSC3).